Consider the following 92-residue polypeptide: Phosphoribosyl-ATP pyrophosphatase (92 aa).

It belongs to the PRA-PH family.

It is found in the cytoplasm. The catalysed reaction is 1-(5-phospho-beta-D-ribosyl)-ATP + H2O = 1-(5-phospho-beta-D-ribosyl)-5'-AMP + diphosphate + H(+). The protein operates within amino-acid biosynthesis; L-histidine biosynthesis; L-histidine from 5-phospho-alpha-D-ribose 1-diphosphate: step 2/9. The protein is Phosphoribosyl-ATP pyrophosphatase of Leptospira borgpetersenii serovar Hardjo-bovis (strain JB197).